A 138-amino-acid polypeptide reads, in one-letter code: Cysteine desulfuration protein SufE (138 aa).

Cysteine 51 functions as the Cysteine persulfide intermediate in the catalytic mechanism.

It belongs to the SufE family. Homodimer. Interacts with SufS.

Its subcellular location is the cytoplasm. It functions in the pathway cofactor biosynthesis; iron-sulfur cluster biosynthesis. In terms of biological role, participates in cysteine desulfuration mediated by SufS. Cysteine desulfuration mobilizes sulfur from L-cysteine to yield L-alanine and constitutes an essential step in sulfur metabolism for biosynthesis of a variety of sulfur-containing biomolecules. Functions as a sulfur acceptor for SufS, by mediating the direct transfer of the sulfur atom from the S-sulfanylcysteine of SufS, an intermediate product of cysteine desulfuration process. This Escherichia coli O81 (strain ED1a) protein is Cysteine desulfuration protein SufE.